The following is a 525-amino-acid chain: Probable alpha-galactosidase A (525 aa).

A signal peptide spans 1–17; sequence MHPSMTLLAILPPLVRA. Cysteine 40 and cysteine 72 are joined by a disulfide. Residues asparagine 43, asparagine 81, and asparagine 117 are each glycosylated (N-linked (GlcNAc...) asparagine). A disulfide bridge links cysteine 120 with cysteine 150. Catalysis depends on aspartate 148, which acts as the Nucleophile. Asparagine 197 is a glycosylation site (N-linked (GlcNAc...) asparagine). The active-site Proton donor is the aspartate 206. Positions 402–525 constitute a Ricin B-type lectin domain; that stretch reads PPDCPMVIPT…GLPSGVDIEA (124 aa). Intrachain disulfides connect cysteine 422–cysteine 434 and cysteine 459–cysteine 472.

It belongs to the glycosyl hydrolase 27 family.

Its subcellular location is the secreted. The enzyme catalyses Hydrolysis of terminal, non-reducing alpha-D-galactose residues in alpha-D-galactosides, including galactose oligosaccharides, galactomannans and galactolipids.. Its function is as follows. Hydrolyzes a variety of simple alpha-D-galactoside as well as more complex molecules such as oligosaccharides and polysaccharides. In Aspergillus clavatus (strain ATCC 1007 / CBS 513.65 / DSM 816 / NCTC 3887 / NRRL 1 / QM 1276 / 107), this protein is Probable alpha-galactosidase A (aglA).